The primary structure comprises 129 residues: Small ribosomal subunit protein uS8 (129 aa).

Belongs to the universal ribosomal protein uS8 family. In terms of assembly, part of the 30S ribosomal subunit. Contacts proteins S5 and S12.

Its function is as follows. One of the primary rRNA binding proteins, it binds directly to 16S rRNA central domain where it helps coordinate assembly of the platform of the 30S subunit. The sequence is that of Small ribosomal subunit protein uS8 from Dichelobacter nodosus (strain VCS1703A).